Reading from the N-terminus, the 673-residue chain is UvrABC system protein B (673 aa).

Residues 26–414 (ANFEAGLAKQ…AGEVTELVVR (389 aa)) enclose the Helicase ATP-binding domain. An ATP-binding site is contributed by 39–46 (GVTGSGKT). The short motif at 92-115 (YYDYYQPEAYVPSSDTFIEKDSSI) is the Beta-hairpin element. The Helicase C-terminal domain occupies 431–597 (QVDDLMSEVH…SVERPIADIM (167 aa)). 2 stretches are compositionally biased toward basic and acidic residues: residues 600-609 (ARDDAAEKKS) and 618-628 (HVAEETPDYRA). Positions 600–628 (ARDDAAEKKSGKGRSKSRHVAEETPDYRA) are disordered. Residues 635 to 670 (AGKLKSLEQKMYQHAKDLEFEAAAQIRDQIQKLKAA) form the UVR domain.

Belongs to the UvrB family. As to quaternary structure, forms a heterotetramer with UvrA during the search for lesions. Interacts with UvrC in an incision complex.

It localises to the cytoplasm. The UvrABC repair system catalyzes the recognition and processing of DNA lesions. A damage recognition complex composed of 2 UvrA and 2 UvrB subunits scans DNA for abnormalities. Upon binding of the UvrA(2)B(2) complex to a putative damaged site, the DNA wraps around one UvrB monomer. DNA wrap is dependent on ATP binding by UvrB and probably causes local melting of the DNA helix, facilitating insertion of UvrB beta-hairpin between the DNA strands. Then UvrB probes one DNA strand for the presence of a lesion. If a lesion is found the UvrA subunits dissociate and the UvrB-DNA preincision complex is formed. This complex is subsequently bound by UvrC and the second UvrB is released. If no lesion is found, the DNA wraps around the other UvrB subunit that will check the other stand for damage. This is UvrABC system protein B from Xanthomonas axonopodis pv. citri (strain 306).